A 154-amino-acid chain; its full sequence is Endoribonuclease YbeY (154 aa).

Zn(2+) is bound by residues His-114, His-118, and His-124.

It belongs to the endoribonuclease YbeY family. Requires Zn(2+) as cofactor.

Its subcellular location is the cytoplasm. Single strand-specific metallo-endoribonuclease involved in late-stage 70S ribosome quality control and in maturation of the 3' terminus of the 16S rRNA. In Haemophilus influenzae (strain PittEE), this protein is Endoribonuclease YbeY.